The sequence spans 234 residues: Sugar fermentation stimulation protein homolog (234 aa).

Belongs to the SfsA family.

This chain is Sugar fermentation stimulation protein homolog, found in Pectobacterium atrosepticum (strain SCRI 1043 / ATCC BAA-672) (Erwinia carotovora subsp. atroseptica).